Here is a 36-residue protein sequence, read N- to C-terminus: Cytochrome b6-f complex subunit 7 (36 aa).

Topologically, residues 1-5 (NAAAE) are lumenal. The helical transmembrane segment at 6 to 28 (IFRIAAVMNGLTLVGVAIGFVLL) threads the bilayer. Over 29–36 (RIEATVEE) the chain is Stromal.

The protein belongs to the PetM family. As to quaternary structure, the 4 large subunits of the cytochrome b6-f complex are cytochrome b6, subunit IV (17 kDa polypeptide, PetD), cytochrome f and the Rieske protein, while the 4 small subunits are PetG, PetL, PetM and PetN. The complex functions as a dimer.

The protein localises to the plastid. It is found in the chloroplast thylakoid membrane. Component of the cytochrome b6-f complex, which mediates electron transfer between photosystem II (PSII) and photosystem I (PSI), cyclic electron flow around PSI, and state transitions. This is Cytochrome b6-f complex subunit 7 from Spinacia oleracea (Spinach).